A 183-amino-acid polypeptide reads, in one-letter code: Guanylate kinase (183 aa).

One can recognise a Guanylate kinase-like domain in the interval 4–182 (GRVVVLTGPS…AITALEAAIF (179 aa)). 11–18 (GPSGVGKG) is an ATP binding site.

It belongs to the guanylate kinase family.

It localises to the cytoplasm. The enzyme catalyses GMP + ATP = GDP + ADP. It carries out the reaction dZMP + ATP = dZDP + ADP. The protein operates within purine metabolism. Essential for recycling GMP and indirectly, cGMP. In terms of biological role, (Microbial infection) Catalyzes the phosphorylation of dZMP to dZDP, when the bacterium is infected by a phage that produces the substrate for the synthesis of dZTP (2- amino-2'-deoxyadenosine 5'-triphosphate), which is then used by the phage as a DNA polymerase substrate. This Synechococcus elongatus (strain ATCC 33912 / PCC 7942 / FACHB-805) (Anacystis nidulans R2) protein is Guanylate kinase.